The sequence spans 488 residues: Pre-glycoprotein polyprotein GP complex (488 aa).

Gly2 carries N-myristoyl glycine; by host lipidation. Over 2 to 17 (GQLFSFFEEVPNIIHE) the chain is Extracellular. The chain crosses the membrane as a helical span at residues 18–32 (AINIALIAVSLIAAL). Position 33 (Lys33) is a topological domain, cytoplasmic. The chain crosses the membrane as a helical span at residues 34–53 (GMINLWKSGLFQLIFFLTLA). Extracellular loops occupy residues 54-58 (GRSCS) and 59-427 (FRIG…TLVD). Residue Cys57 coordinates Zn(2+). Residues Asn69, Asn88, Asn99, Asn125, Asn171, Asn178, and Asn222 are each glycosylated (N-linked (GlcNAc...) asparagine; by host). 4 cysteine pairs are disulfide-bonded: Cys85–Cys229, Cys274–Cys287, Cys296–Cys305, and Cys359–Cys380. Asn360, Asn368, Asn385, and Asn390 each carry an N-linked (GlcNAc...) asparagine; by host glycan. The helical transmembrane segment at 428–448 (ICFWSTLFFTTTLFLHLVGFP) threads the bilayer. At 449–488 (THRHIRGEPCPLPHRLNSRGGCRCGKYPELKKPITWHKNH) the chain is on the cytoplasmic side. Zn(2+) is bound by residues His450, His452, Cys458, His462, Cys470, Cys472, and His488.

It belongs to the arenaviridae GPC protein family. As to quaternary structure, homotetramer; disulfide-linked. Homotetramer. GP2 homotetramers bind through ionic interactions with GP1 homotetramers to form the GP complex together with the stable signal peptide. The GP-C polyprotein interacts with the host protease MBTPS1/SKI-1 resulting in the polyprotein processing. In terms of processing, specific enzymatic cleavages in vivo yield mature proteins. GP-C polyprotein is cleaved in the endoplasmic reticulum by the host protease MBTPS1. Only cleaved glycoprotein is incorporated into virions. The SSP remains stably associated with the GP complex following cleavage by signal peptidase and plays crucial roles in the trafficking of GP through the secretory pathway. Post-translationally, myristoylation is necessary for GP2-mediated fusion activity.

It is found in the virion membrane. Its subcellular location is the host endoplasmic reticulum membrane. The protein resides in the host Golgi apparatus membrane. It localises to the host cell membrane. Its function is as follows. Interacts with the host receptor. Mediates virus attachment to host TFRC. This attachment induces virion internalization predominantly through clathrin-mediated endocytosis. Functionally, class I viral fusion protein that directs fusion of viral and host endosomal membranes, leading to delivery of the nucleocapsid into the cytoplasm. Membrane fusion is mediated by irreversible conformational changes induced upon acidification in the endosome. In terms of biological role, stable signal peptide (SSP): cleaved and functions as a signal peptide. In addition, it is also retained as the third component of the GP complex. The SSP is required for efficient glycoprotein expression, post-translational maturation cleavage of GP1 and GP2, glycoprotein transport to the cell surface plasma membrane, formation of infectious virus particles, and acid pH-dependent glycoprotein-mediated cell fusion. The polypeptide is Pre-glycoprotein polyprotein GP complex (Homo sapiens (Human)).